A 124-amino-acid polypeptide reads, in one-letter code: Small ribosomal subunit protein uS12 (124 aa).

D89 is subject to 3-methylthioaspartic acid.

The protein belongs to the universal ribosomal protein uS12 family. In terms of assembly, part of the 30S ribosomal subunit. Contacts proteins S8 and S17. May interact with IF1 in the 30S initiation complex.

With S4 and S5 plays an important role in translational accuracy. Functionally, interacts with and stabilizes bases of the 16S rRNA that are involved in tRNA selection in the A site and with the mRNA backbone. Located at the interface of the 30S and 50S subunits, it traverses the body of the 30S subunit contacting proteins on the other side and probably holding the rRNA structure together. The combined cluster of proteins S8, S12 and S17 appears to hold together the shoulder and platform of the 30S subunit. The sequence is that of Small ribosomal subunit protein uS12 (rpsL) from Mannheimia haemolytica (Pasteurella haemolytica).